A 658-amino-acid chain; its full sequence is Methionine--tRNA ligase (658 aa).

Positions 9–19 match the 'HIGH' region motif; the sequence is PYANGKAHVGH. Zn(2+) is bound by residues C140, C143, C152, and C156. Residues 322-326 carry the 'KMSKS' region motif; the sequence is TFSKS. Position 325 (K325) interacts with ATP. The region spanning 558 to 658 is the tRNA-binding domain; the sequence is DFQKLDIRIG…KEVEPGTRVC (101 aa).

The protein belongs to the class-I aminoacyl-tRNA synthetase family. MetG type 1 subfamily. As to quaternary structure, homodimer. It depends on Zn(2+) as a cofactor.

The protein resides in the cytoplasm. The enzyme catalyses tRNA(Met) + L-methionine + ATP = L-methionyl-tRNA(Met) + AMP + diphosphate. Is required not only for elongation of protein synthesis but also for the initiation of all mRNA translation through initiator tRNA(fMet) aminoacylation. The chain is Methionine--tRNA ligase from Archaeoglobus fulgidus (strain ATCC 49558 / DSM 4304 / JCM 9628 / NBRC 100126 / VC-16).